The following is a 258-amino-acid chain: Probable dihydroorotate dehydrogenase B (NAD(+)), electron transfer subunit (258 aa).

Positions 1–90 (MRPISATIKE…RGPYGNGWEI (90 aa)) constitute an FAD-binding FR-type domain. The [2Fe-2S] cluster site is built by cysteine 210, cysteine 215, cysteine 218, and cysteine 228.

It belongs to the PyrK family. Heterotetramer of 2 PyrK and 2 PyrD type B subunits. [2Fe-2S] cluster serves as cofactor. The cofactor is FAD.

It participates in pyrimidine metabolism; UMP biosynthesis via de novo pathway; orotate from (S)-dihydroorotate (NAD(+) route): step 1/1. Functionally, responsible for channeling the electrons from the oxidation of dihydroorotate from the FMN redox center in the PyrD type B subunit to the ultimate electron acceptor NAD(+). The protein is Probable dihydroorotate dehydrogenase B (NAD(+)), electron transfer subunit of Methanocella arvoryzae (strain DSM 22066 / NBRC 105507 / MRE50).